Here is a 1163-residue protein sequence, read N- to C-terminus: Leptin receptor (1163 aa).

The signal sequence occupies residues 1–21 (MICQKFCVVLLHWEFICVITA). Residues 22–837 (FNLSYPITPW…QDNTEKHQND (816 aa)) lie on the Extracellular side of the membrane. N-linked (GlcNAc...) asparagine glycosylation is found at asparagine 23, asparagine 41, asparagine 56, asparagine 71, asparagine 79, asparagine 96, and asparagine 114. 2 disulfides stabilise this stretch: cysteine 37-cysteine 88 and cysteine 87-cysteine 97. Intrachain disulfides connect cysteine 129-cysteine 140 and cysteine 184-cysteine 194. 5 N-linked (GlcNAc...) asparagine glycosylation sites follow: asparagine 185, asparagine 204, asparagine 274, asparagine 345, and asparagine 395. The Fibronectin type-III 1 domain maps to 237 to 331 (PPLGLRMEIT…TPHVFTTQDV (95 aa)). 2 disulfides stabilise this stretch: cysteine 350-cysteine 410 and cysteine 411-cysteine 416. A glycan (N-linked (GlcNAc...) asparagine) is linked at asparagine 431. Cystine bridges form between cysteine 434/cysteine 445, cysteine 471/cysteine 526, and cysteine 486/cysteine 496. The interval 465 to 482 (RRSSLYCFDIPSIHPISK) is leptin-binding. Fibronectin type-III domains lie at 537-632 (PPSS…TVVM), 637-730 (PMRG…LTFS), and 738-831 (IVQS…QDNT). A WSXWS motif motif is present at residues 620–624 (WSNWS). Residues asparagine 622, asparagine 657, asparagine 668, asparagine 686, asparagine 695, asparagine 726, and asparagine 748 are each glycosylated (N-linked (GlcNAc...) asparagine). Residues 838–860 (AGLYVIVPVIISSSILLLGTLLI) traverse the membrane as a helical segment. Residues 861–1163 (LHQRMKKLFW…MENKMCDLTV (303 aa)) are Cytoplasmic-facing. The Box 1 motif signature appears at 869 to 877 (FWEDVPNPK). A Phosphoserine modification is found at serine 880. Positions 891-896 (ETFEHL) are required for JAK2 activation. The interval 896–904 (LFIKHTASV) is required for STAT3 phosphorylation. Position 984 is a phosphotyrosine; by JAK2 (tyrosine 984). Tyrosine 1077 bears the Phosphotyrosine mark. At tyrosine 1139 the chain carries Phosphotyrosine; by JAK2.

Belongs to the type I cytokine receptor family. Type 2 subfamily. As to quaternary structure, present as a mixture of monomers and dimers. The phosphorylated receptor binds a number of SH2 domain-containing proteins such as JAK2, STAT3, PTPN11, and SOCS3. Interaction with SOCS3 inhibits JAK/STAT signaling and MAPK cascade. On ligand binding, phosphorylated on two conserved C-terminal tyrosine residues (isoform B only) by JAK2. Tyr-984 is required for complete binding and activation of PTPN11, ERK/FOS activation and, for interaction with SOCS3. Phosphorylation on Tyr-1139 is required for STAT3 binding/activation. Post-translationally, on ligand binding, phosphorylated on two conserved C-terminal tyrosine residues (isoform B only) by JAK2. Tyr-984 is required for complete binding and activation of PTPN11, ERK/FOS activation,for interaction with SOCS3 and SOCS3 mediated inhibition of leptin signaling. Phosphorylation on Tyr-1139 is required for STAT3 binding/activation. Phosphorylation of Tyr-1077 has a more accessory role. As to expression, widely expressed. High expression of isoform B in liver, adipose tissue, hypothalamus and choroid plexus.

Its subcellular location is the cell membrane. The protein localises to the basolateral cell membrane. Receptor for hormone LEP/leptin. On ligand binding, mediates LEP central and peripheral effects through the activation of different signaling pathways such as JAK2/STAT3 and MAPK cascade/FOS. In the hypothalamus, LEP acts as an appetite-regulating factor that induces a decrease in food intake and an increase in energy consumption by inducing anorexinogenic factors and suppressing orexigenic neuropeptides, also regulates bone mass and secretion of hypothalamo-pituitary-adrenal hormones. In the periphery, increases basal metabolism, influences reproductive function, regulates pancreatic beta-cell function and insulin secretion, is pro-angiogenic and affects innate and adaptive immunity. Control of energy homeostasis and melanocortin production (stimulation of POMC and full repression of AgRP transcription) is mediated by STAT3 signaling, whereas distinct signals regulate NPY and the control of fertility, growth and glucose homeostasis. Involved in the regulation of counter-regulatory response to hypoglycemia by inhibiting neurons of the parabrachial nucleus. Has a specific effect on T lymphocyte responses, differentially regulating the proliferation of naive and memory T-cells. Leptin increases Th1 and suppresses Th2 cytokine production. In terms of biological role, may transport LEP across the blood-brain barrier. Binds LEP and mediates LEP endocytosis. Does not induce phosphorylation of and activate STAT3. This is Leptin receptor (LEPR) from Macaca mulatta (Rhesus macaque).